Reading from the N-terminus, the 86-residue chain is Small ribosomal subunit protein bS18 (86 aa).

Belongs to the bacterial ribosomal protein bS18 family. As to quaternary structure, part of the 30S ribosomal subunit. Forms a tight heterodimer with protein bS6.

Binds as a heterodimer with protein bS6 to the central domain of the 16S rRNA, where it helps stabilize the platform of the 30S subunit. The chain is Small ribosomal subunit protein bS18 from Herpetosiphon aurantiacus (strain ATCC 23779 / DSM 785 / 114-95).